The primary structure comprises 502 residues: Protein nucleotidyltransferase YdiU (502 aa).

The ATP site is built by Gly98, Gly100, Arg101, Lys121, Asp133, Gly134, Arg184, and Arg191. The active-site Proton acceptor is Asp260. Residues Asn261 and Asp270 each coordinate Mg(2+). Asp270 lines the ATP pocket.

This sequence belongs to the SELO family. Mg(2+) is required as a cofactor. It depends on Mn(2+) as a cofactor.

It catalyses the reaction L-seryl-[protein] + ATP = 3-O-(5'-adenylyl)-L-seryl-[protein] + diphosphate. The catalysed reaction is L-threonyl-[protein] + ATP = 3-O-(5'-adenylyl)-L-threonyl-[protein] + diphosphate. It carries out the reaction L-tyrosyl-[protein] + ATP = O-(5'-adenylyl)-L-tyrosyl-[protein] + diphosphate. The enzyme catalyses L-histidyl-[protein] + UTP = N(tele)-(5'-uridylyl)-L-histidyl-[protein] + diphosphate. It catalyses the reaction L-seryl-[protein] + UTP = O-(5'-uridylyl)-L-seryl-[protein] + diphosphate. The catalysed reaction is L-tyrosyl-[protein] + UTP = O-(5'-uridylyl)-L-tyrosyl-[protein] + diphosphate. Nucleotidyltransferase involved in the post-translational modification of proteins. It can catalyze the addition of adenosine monophosphate (AMP) or uridine monophosphate (UMP) to a protein, resulting in modifications known as AMPylation and UMPylation. This is Protein nucleotidyltransferase YdiU from Rhizobium rhizogenes (strain K84 / ATCC BAA-868) (Agrobacterium radiobacter).